A 28-amino-acid chain; its full sequence is Ranatuerin-2SEb (28 aa).

A disulfide bond links C23 and C28.

Expressed by the skin glands.

It is found in the secreted. Functionally, mast cell degranulating peptide. Causes histamine release from rat peritoneal mast cells in vitro. Has antibacterial activity against the Gram-negative bacterium E.coli K12 and Gram-positive bacterium M.luteus NCT C2665. The chain is Ranatuerin-2SEb from Lithobates sevosus (Dusky gopher frog).